Reading from the N-terminus, the 296-residue chain is ATP synthase gamma chain (296 aa).

It belongs to the ATPase gamma chain family. As to quaternary structure, F-type ATPases have 2 components, CF(1) - the catalytic core - and CF(0) - the membrane proton channel. CF(1) has five subunits: alpha(3), beta(3), gamma(1), delta(1), epsilon(1). CF(0) has three main subunits: a, b and c.

Its subcellular location is the cell inner membrane. Its function is as follows. Produces ATP from ADP in the presence of a proton gradient across the membrane. The gamma chain is believed to be important in regulating ATPase activity and the flow of protons through the CF(0) complex. This is ATP synthase gamma chain from Jannaschia sp. (strain CCS1).